A 276-amino-acid chain; its full sequence is Large ribosomal subunit protein uL2 (276 aa).

A disordered region spans residues 219–276; it reads TVRGSAMNPNDHPHGGGEGRTSIGRPAPVTPWGKPALGYKTRDSKKASNKMIVSRRKK.

Belongs to the universal ribosomal protein uL2 family. Part of the 50S ribosomal subunit. Forms a bridge to the 30S subunit in the 70S ribosome.

In terms of biological role, one of the primary rRNA binding proteins. Required for association of the 30S and 50S subunits to form the 70S ribosome, for tRNA binding and peptide bond formation. It has been suggested to have peptidyltransferase activity; this is somewhat controversial. Makes several contacts with the 16S rRNA in the 70S ribosome. The chain is Large ribosomal subunit protein uL2 from Alkaliphilus oremlandii (strain OhILAs) (Clostridium oremlandii (strain OhILAs)).